We begin with the raw amino-acid sequence, 90 residues long: Small ribosomal subunit protein uS19 (90 aa).

The protein belongs to the universal ribosomal protein uS19 family.

In terms of biological role, protein S19 forms a complex with S13 that binds strongly to the 16S ribosomal RNA. The chain is Small ribosomal subunit protein uS19 from Hydrogenovibrio crunogenus (strain DSM 25203 / XCL-2) (Thiomicrospira crunogena).